A 287-amino-acid polypeptide reads, in one-letter code: Protoheme IX farnesyltransferase (287 aa).

The next 8 helical transmembrane spans lie at 9–29, 31–51, 94–114, 132–152, 158–178, 202–222, 228–248, and 267–287; these read IVTM…SATL, LIDW…AGAA, IILW…TWLI, VGAI…GGTL, WMLF…IAWL, AWQS…LAWF, VASA…WPLL, and LRWS…RASL.

The protein belongs to the UbiA prenyltransferase family. Protoheme IX farnesyltransferase subfamily.

It is found in the cell inner membrane. It carries out the reaction heme b + (2E,6E)-farnesyl diphosphate + H2O = Fe(II)-heme o + diphosphate. It functions in the pathway porphyrin-containing compound metabolism; heme O biosynthesis; heme O from protoheme: step 1/1. Functionally, converts heme B (protoheme IX) to heme O by substitution of the vinyl group on carbon 2 of heme B porphyrin ring with a hydroxyethyl farnesyl side group. The chain is Protoheme IX farnesyltransferase from Rhodopirellula baltica (strain DSM 10527 / NCIMB 13988 / SH1).